The chain runs to 1405 residues: DNA-directed RNA polymerase subunit beta' (1405 aa).

Zn(2+) contacts are provided by C70, C72, C85, and C88. Positions 460, 462, and 464 each coordinate Mg(2+). Residues C814, C888, C895, and C898 each coordinate Zn(2+).

Belongs to the RNA polymerase beta' chain family. In terms of assembly, the RNAP catalytic core consists of 2 alpha, 1 beta, 1 beta' and 1 omega subunit. When a sigma factor is associated with the core the holoenzyme is formed, which can initiate transcription. Requires Mg(2+) as cofactor. The cofactor is Zn(2+).

The enzyme catalyses RNA(n) + a ribonucleoside 5'-triphosphate = RNA(n+1) + diphosphate. Its function is as follows. DNA-dependent RNA polymerase catalyzes the transcription of DNA into RNA using the four ribonucleoside triphosphates as substrates. The chain is DNA-directed RNA polymerase subunit beta' from Shewanella woodyi (strain ATCC 51908 / MS32).